Consider the following 157-residue polypeptide: MGVNPPFLCEGGGEVTVDLWQLVEEAVSPLGLDVLEVHFARGELLVRLERKDERPITVADLEEASRHIEAALDREDPIPGSYRLLVESPGPKRPLFTRRHFERFQGLKAKVPGPEGFTGRILRVEGEEVVFQVGDEERRLRIGTFRANLAEWPEEPR.

The protein belongs to the RimP family.

The protein resides in the cytoplasm. Required for maturation of 30S ribosomal subunits. This Thermus thermophilus (strain ATCC BAA-163 / DSM 7039 / HB27) protein is Ribosome maturation factor RimP.